The primary structure comprises 355 residues: Class E basic helix-loop-helix protein 22 (355 aa).

Disordered regions lie at residues 34-90 (AFRS…GGGG) and 128-215 (GRGS…KEQK). Gly residues-rich tracts occupy residues 81–90 (GGGGASGGGG) and 185–207 (GGSG…GGGS). Residues 216–270 (ALRLNINARERRRMHDLNDALDELRAVIPYAHSPSVRKLSKIATLLLAKNYILMQ) form the bHLH domain.

In terms of assembly, interacts with PRDM8. As to expression, brain-specific, with the highest expression in the cerebellum.

Its subcellular location is the nucleus. Functionally, inhibits DNA binding of TCF3/E47 homodimers and TCF3 (E47)/NEUROD1 heterodimers and acts as a strong repressor of Neurod1 and Myod-responsive genes, probably by heterodimerization with class a basic helix-loop-helix factors. Despite the presence of an intact basic domain, does not bind to DNA. In the brain, may function as an area-specific transcription factor that regulates the postmitotic acquisition of area identities and elucidate the genetic hierarchy between progenitors and postmitotic neurons driving neocortical arealization. May be required for the survival of a specific population of inhibitory neurons in the superficial laminae of the spinal cord dorsal horn that may regulate pruritis. Seems to play a crucial role in the retinogenesis, in the specification of amacrine and bipolar subtypes. Forms with PRDM8 a transcriptional repressor complex controlling genes involved in neural development and neuronal differentiation. This Mus musculus (Mouse) protein is Class E basic helix-loop-helix protein 22 (Bhlhe22).